The following is a 549-amino-acid chain: OBERON-like protein (549 aa).

Residues methionine 1–threonine 56 form a disordered region. Composition is skewed to polar residues over residues proline 28–aspartate 38 and serine 45–threonine 56. The PHD-type zinc finger occupies leucine 224 to threonine 288. Positions valine 394–glutamate 520 form a coiled coil. Residues glutamine 519 to methionine 549 form a disordered region. The span at serine 521–methionine 538 shows a compositional bias: polar residues.

Self-interacts and probably forms heteromers. Binds to VPg of pea seed borne mosaic virus (PSbMV), turnip mosaic virus (TuMV) and lettuce mosaic virus (LMV), but not with VPg of tobacco etch virus (TEV), cowpea mosaic virus (CPMV), tomato black ring virus (TBRV) and grapevine fan leaf virus (GFLV).

It is found in the nucleus. In terms of biological role, required for the maintenance and/or establishment of both the shoot and root meristems, probably by controlling the expression of the meristem genes and of genes required for auxin responses. Involved in the development of the basal pole and in auxin-mediated root and vascular development in the embryo. Confers sensitivity to turnip mosaic virus (TuMV) probably by promoting viral movement and multiplication via interaction with TuMV VPg. This Nicotiana benthamiana protein is OBERON-like protein (PVIP).